A 438-amino-acid polypeptide reads, in one-letter code: GDP-mannose 6-dehydrogenase (438 aa).

6 residues coordinate NAD(+): Tyr10, Val11, Asp30, Lys35, Thr86, and Thr124. Residues Glu161, Lys210, Asn214, His217, Asn225, Tyr256, Tyr257, Arg259, Phe262, and Gly265 each coordinate GDP-alpha-D-mannuronate. Cys268 is a catalytic residue. Lys271 contributes to the NAD(+) binding site. Residue Lys324 coordinates GDP-alpha-D-mannuronate. Arg331 provides a ligand contact to NAD(+).

This sequence belongs to the UDP-glucose/GDP-mannose dehydrogenase family.

It carries out the reaction GDP-alpha-D-mannose + 2 NAD(+) + H2O = GDP-alpha-D-mannuronate + 2 NADH + 3 H(+). It participates in glycan biosynthesis; alginate biosynthesis. In terms of biological role, catalyzes the oxidation of guanosine diphospho-D-mannose (GDP-D-mannose) to GDP-D-mannuronic acid, a precursor for alginate polymerization. The alginate layer causes a mucoid phenotype and provides a protective barrier against host immune defenses and antibiotics. This chain is GDP-mannose 6-dehydrogenase (algD), found in Pseudomonas syringae pv. tomato (strain ATCC BAA-871 / DC3000).